The following is a 267-amino-acid chain: Pro-opiomelanocortin (267 aa).

The signal sequence occupies residues 1 to 26 (MPRLCGSRSGALLLTLLLQASMGVRG). F87 is modified (phenylalanine amide). 2 disordered regions span residues 88–156 (GRRN…RPVK) and 215–242 (KKDE…GFMT). N91 carries N-linked (GlcNAc...) asparagine glycosylation. Residues 94 to 105 (SSGGGGGGGGAG) are compositionally biased toward gly residues. The propeptide occupies 109 to 133 (EEEEVAAGEGPGPRGDGVAPGPRQD). The span at 131–143 (RQDKRSYSMEHFR) shows a compositional bias: basic and acidic residues. Residue S136 is modified to N-acetylserine; in Corticotropin. V148 carries the valine amide modification. Residues 215-237 (KKDEGPYKMEHFRWGSPPKDKRY) show a composition bias toward basic and acidic residues.

This sequence belongs to the POMC family. In terms of processing, specific enzymatic cleavages at paired basic residues yield the different active peptides. In terms of tissue distribution, ACTH and MSH are produced by the pituitary gland.

It localises to the secreted. Stimulates the adrenal glands to release cortisol. In terms of biological role, anorexigenic peptide. Increases the pigmentation of skin by increasing melanin production in melanocytes. Functionally, increases the pigmentation of skin by increasing melanin production in melanocytes. Its function is as follows. Endogenous orexigenic opiate. Endogenous opiate. The polypeptide is Pro-opiomelanocortin (POMC) (Sus scrofa (Pig)).